The chain runs to 193 residues: Ion-translocating oxidoreductase complex subunit A (193 aa).

Helical transmembrane passes span L5–L25, F47–L67, L72–V92, L102–L122, A134–I154, and S171–V191.

It belongs to the NqrDE/RnfAE family. In terms of assembly, the complex is composed of six subunits: RnfA, RnfB, RnfC, RnfD, RnfE and RnfG.

Its subcellular location is the cell inner membrane. Its function is as follows. Part of a membrane-bound complex that couples electron transfer with translocation of ions across the membrane. The protein is Ion-translocating oxidoreductase complex subunit A of Serratia proteamaculans (strain 568).